Here is a 256-residue protein sequence, read N- to C-terminus: Trypsin alpha (256 aa).

The N-terminal stretch at 1–22 (MLKIVILLSAVVCALGGTVPEG) is a signal peptide. Residues 23–30 (LLPQLDGR) constitute a propeptide, activation peptide. The Peptidase S1 domain occupies 31 to 254 (IVGGSATTIS…LRSWVVSTAN (224 aa)). An intrachain disulfide couples Cys-56 to Cys-72. Active-site charge relay system residues include His-71 and Asp-116. 2 disulfide bridges follow: Cys-180–Cys-197 and Cys-206–Cys-230. The active-site Charge relay system is the Ser-210.

This sequence belongs to the peptidase S1 family. As to expression, synthesized in the midgut of both larvae and adults, primarily in the ventriculus and gastric caeca.

The protein localises to the secreted. It is found in the extracellular space. It catalyses the reaction Preferential cleavage: Arg-|-Xaa, Lys-|-Xaa.. This chain is Trypsin alpha (alphaTry), found in Drosophila melanogaster (Fruit fly).